A 406-amino-acid polypeptide reads, in one-letter code: Tryptophan synthase beta chain (406 aa).

N6-(pyridoxal phosphate)lysine is present on lysine 99.

The protein belongs to the TrpB family. Tetramer of two alpha and two beta chains. Pyridoxal 5'-phosphate serves as cofactor.

It catalyses the reaction (1S,2R)-1-C-(indol-3-yl)glycerol 3-phosphate + L-serine = D-glyceraldehyde 3-phosphate + L-tryptophan + H2O. It participates in amino-acid biosynthesis; L-tryptophan biosynthesis; L-tryptophan from chorismate: step 5/5. Functionally, the beta subunit is responsible for the synthesis of L-tryptophan from indole and L-serine. The protein is Tryptophan synthase beta chain of Methylobacterium nodulans (strain LMG 21967 / CNCM I-2342 / ORS 2060).